A 680-amino-acid polypeptide reads, in one-letter code: Transketolase 1 (680 aa).

Residue H30 participates in substrate binding. Thiamine diphosphate-binding positions include H69 and 116 to 118; that span reads GPL. Position 157 (D157) interacts with Mg(2+). Thiamine diphosphate contacts are provided by G158 and N187. Mg(2+) is bound by residues N187 and I189. H263 is a substrate binding site. Thiamine diphosphate is bound at residue H263. Phosphoserine occurs at positions 286 and 335. Substrate contacts are provided by R359 and S386. S402 carries the post-translational modification Phosphoserine. Thiamine diphosphate-binding residues include E418 and F445. The active-site Proton donor is the E418. Substrate is bound by residues H469 and D477. The residue at position 492 (S492) is a Phosphoserine. R528 is a substrate binding site. A Glycyl lysine isopeptide (Lys-Gly) (interchain with G-Cter in ubiquitin) cross-link involves residue K647.

It belongs to the transketolase family. Homodimer. The cofactor is Mg(2+). Requires Ca(2+) as cofactor. It depends on Mn(2+) as a cofactor. Co(2+) is required as a cofactor. Thiamine diphosphate serves as cofactor.

It catalyses the reaction D-sedoheptulose 7-phosphate + D-glyceraldehyde 3-phosphate = aldehydo-D-ribose 5-phosphate + D-xylulose 5-phosphate. In terms of biological role, catalyzes the transfer of a two-carbon ketol group from a ketose donor to an aldose acceptor, via a covalent intermediate with the cofactor thiamine pyrophosphate. This chain is Transketolase 1 (TKL1), found in Saccharomyces cerevisiae (strain ATCC 204508 / S288c) (Baker's yeast).